We begin with the raw amino-acid sequence, 291 residues long: Elongation factor Ts (291 aa).

Residues 80–83 form an involved in Mg(2+) ion dislocation from EF-Tu region; it reads TDFV.

Belongs to the EF-Ts family.

The protein localises to the cytoplasm. Functionally, associates with the EF-Tu.GDP complex and induces the exchange of GDP to GTP. It remains bound to the aminoacyl-tRNA.EF-Tu.GTP complex up to the GTP hydrolysis stage on the ribosome. The polypeptide is Elongation factor Ts (Ligilactobacillus salivarius (strain UCC118) (Lactobacillus salivarius)).